Here is a 148-residue protein sequence, read N- to C-terminus: MAETKVILTKSVNHLGHPGDVVAVKSGYARNYLFPQGLAFAWSKGAAAQIEAMKRARLAKAVATREEAVAAKEIIEGSTVEIAAKVSESGKLFGGISAEKIAIALSSKVEVNPKNITVEPIKTTGDFPATVALHPEITANFFVKVVAE.

This sequence belongs to the bacterial ribosomal protein bL9 family.

Its function is as follows. Binds to the 23S rRNA. The sequence is that of Large ribosomal subunit protein bL9 from Bifidobacterium adolescentis (strain ATCC 15703 / DSM 20083 / NCTC 11814 / E194a).